The following is a 353-amino-acid chain: Glutamine synthetase cytosolic isozyme 1-5 (353 aa).

Residue threonine 2 is modified to N-acetylthreonine. Serine 3 carries the phosphoserine modification. One can recognise a GS beta-grasp domain in the interval 19-99; it reads IIAEYIWIGG…VMCDAYRPAG (81 aa). Residues 106–353 enclose the GS catalytic domain; that stretch reads NRHKAVKIFD…TSMIAETTIL (248 aa).

It belongs to the glutamine synthetase family. In terms of assembly, homooctamer. Not expressed in roots.

It is found in the cytoplasm. The enzyme catalyses L-glutamate + NH4(+) + ATP = L-glutamine + ADP + phosphate + H(+). This Arabidopsis thaliana (Mouse-ear cress) protein is Glutamine synthetase cytosolic isozyme 1-5 (GLN1-5).